The sequence spans 422 residues: Tryptophan synthase beta chain (422 aa).

At Lys111 the chain carries N6-(pyridoxal phosphate)lysine.

The protein belongs to the TrpB family. In terms of assembly, tetramer of two alpha and two beta chains. Pyridoxal 5'-phosphate is required as a cofactor.

The enzyme catalyses (1S,2R)-1-C-(indol-3-yl)glycerol 3-phosphate + L-serine = D-glyceraldehyde 3-phosphate + L-tryptophan + H2O. It functions in the pathway amino-acid biosynthesis; L-tryptophan biosynthesis; L-tryptophan from chorismate: step 5/5. Functionally, the beta subunit is responsible for the synthesis of L-tryptophan from indole and L-serine. The chain is Tryptophan synthase beta chain from Pseudothermotoga lettingae (strain ATCC BAA-301 / DSM 14385 / NBRC 107922 / TMO) (Thermotoga lettingae).